The primary structure comprises 530 residues: UPF0422 protein lpg2959 (530 aa).

The first 19 residues, 1-19 (MKFKKIILALACLSSPLYA), serve as a signal peptide directing secretion. Residues 20 to 66 (DQDQQLKSEIQRLQHQAEDLQAQLNRLQKQLANHKSSQQKHEQQAAA) are a coiled coil. Residues 50 to 81 (LANHKSSQQKHEQQAAAKPAEPQSKPTVKSGA) are disordered. A compositionally biased stretch (low complexity) spans 63 to 75 (QAAAKPAEPQSKP).

Belongs to the UPF0422 family.

The chain is UPF0422 protein lpg2959 from Legionella pneumophila subsp. pneumophila (strain Philadelphia 1 / ATCC 33152 / DSM 7513).